Reading from the N-terminus, the 87-residue chain is MTETEEVITLVDEEGVEHDFTVIDIIEVDGSEYAILLPMEDECEEAIILKLTHDENGNELLVDIEDDEEWEKVADAWEEMLAEEEAD.

This sequence belongs to the UPF0473 family.

The sequence is that of UPF0473 protein PTH_1066 from Pelotomaculum thermopropionicum (strain DSM 13744 / JCM 10971 / SI).